The sequence spans 223 residues: Uracil-DNA glycosylase (223 aa).

The active-site Proton acceptor is aspartate 66.

This sequence belongs to the uracil-DNA glycosylase (UDG) superfamily. UNG family.

Its subcellular location is the cytoplasm. The enzyme catalyses Hydrolyzes single-stranded DNA or mismatched double-stranded DNA and polynucleotides, releasing free uracil.. Excises uracil residues from the DNA which can arise as a result of misincorporation of dUMP residues by DNA polymerase or due to deamination of cytosine. This Sulfurimonas denitrificans (strain ATCC 33889 / DSM 1251) (Thiomicrospira denitrificans (strain ATCC 33889 / DSM 1251)) protein is Uracil-DNA glycosylase.